A 295-amino-acid chain; its full sequence is uncharacterized protein (295 aa).

Disordered regions lie at residues 33-52 and 180-295; these read VDAPPASQIPGLSNLGDSHS and LSKA…AELK. Residue Ser50 is modified to Phosphoserine. 2 stretches are compositionally biased toward polar residues: residues 205–217 and 241–251; these read QKNSSPTNFSKLI and TSRASVLSQSP. Residues 267–276 show a composition bias toward acidic residues; it reads EASEGPEDTP. Residues 277-289 are compositionally biased toward low complexity; the sequence is ESSQSPEESVSAS.

This is an uncharacterized protein from Homo sapiens (Human).